The following is a 214-amino-acid chain: Small ribosomal subunit protein eS6 (214 aa).

The protein belongs to the eukaryotic ribosomal protein eS6 family.

In Saccharolobus islandicus (strain L.S.2.15 / Lassen #1) (Sulfolobus islandicus), this protein is Small ribosomal subunit protein eS6.